Reading from the N-terminus, the 605-residue chain is 9-cis-epoxycarotenoid dioxygenase NCED1, chloroplastic (605 aa).

The N-terminal 16 residues, 1–16, are a transit peptide targeting the chloroplast; sequence MATTTSHATNTWIKTK. The interval 55-89 is disordered; the sequence is ILHFPKQSSNYQTPKNNTISHPKQENNNSSSSSTS. Positions 60 to 75 are enriched in polar residues; it reads KQSSNYQTPKNNTISH. A compositionally biased stretch (low complexity) spans 80-89; the sequence is NNNSSSSSTS. Residues His-302, His-351, His-416, and His-592 each contribute to the Fe cation site.

The protein belongs to the carotenoid oxygenase family. Fe(2+) is required as a cofactor. In terms of tissue distribution, expressed in developing and ripening fruits. Highly expressed in pulp. Observed in unpollinated ovaries (e.g. ovules, placenta and pericarp). Expressed in flowers.

The protein localises to the plastid. It localises to the chloroplast stroma. It catalyses the reaction a 9-cis-epoxycarotenoid + O2 = a 12'-apo-carotenal + 2-cis,4-trans-xanthoxin. It carries out the reaction 9-cis-violaxanthin + O2 = (3S,5R,6S)-5,6-epoxy-3-hydroxy-5,6-dihydro-12'-apo-beta-caroten-12'-al + 2-cis,4-trans-xanthoxin. The enzyme catalyses 9'-cis-neoxanthin + O2 = (3S,5R,6R)-3,5-dihydroxy-6,7-didehydro-5,6-dihydro-12'-apo-beta-caroten-12'-al + 2-cis,4-trans-xanthoxin. Its pathway is plant hormone biosynthesis; abscisate biosynthesis. In terms of biological role, has a 11,12(11',12') 9-cis epoxycarotenoid cleavage activity. Catalyzes the first step of abscisic-acid (ABA) biosynthesis from carotenoids. Required for ABA accumulation upon drought. Required for ABA-mediated regulation of anther/pollen development, including metabolism, cell wall modification and transcription level. Positive regulator of fruit ripening involved in the biosynthesis of abscisic acid (ABA); initiates ABA biosynthesis at the onset of fruit ripening. Modulates the degree of pigmentation and carotenoid composition as well as pectin catabolism during ripening and may regulate the ethylene production and action in climacteric tomato fruit. This chain is 9-cis-epoxycarotenoid dioxygenase NCED1, chloroplastic, found in Solanum lycopersicum (Tomato).